We begin with the raw amino-acid sequence, 262 residues long: MLTRYKMTMAYDGHLFHGFQLQPDQRTVQGTVEDALKKMTKGKRIIVQGSGRTDAGVHAIGQVIHFDYPGKEIPANRMILALNSMMPTDIVFTDCQIVDEDFHARYSIKGKWYRYRLSLDYFVNPFKRFYTGHFPYQLDLEKMRIAAQDLLGKHDFTSFAASGGQIKDKVRTIYYINITKDEKENEIVFDFIGSGFLYNMVRIMVAALLEIGNERRPLHDLRRVIAAKDRQEVRQTAQGSGLYLYHVFYDEIPQKYRQDQYL.

Asp-54 (nucleophile) is an active-site residue. Tyr-113 lines the substrate pocket.

It belongs to the tRNA pseudouridine synthase TruA family. As to quaternary structure, homodimer.

It catalyses the reaction uridine(38/39/40) in tRNA = pseudouridine(38/39/40) in tRNA. Formation of pseudouridine at positions 38, 39 and 40 in the anticodon stem and loop of transfer RNAs. This chain is tRNA pseudouridine synthase A, found in Lactobacillus acidophilus (strain ATCC 700396 / NCK56 / N2 / NCFM).